We begin with the raw amino-acid sequence, 319 residues long: Acetyl-coenzyme A carboxylase carboxyl transferase subunit alpha (319 aa).

One can recognise a CoA carboxyltransferase C-terminal domain in the interval 35–296 (NIDEEVHRLR…KAQLLEDLAD (262 aa)).

It belongs to the AccA family. As to quaternary structure, acetyl-CoA carboxylase is a heterohexamer composed of biotin carboxyl carrier protein (AccB), biotin carboxylase (AccC) and two subunits each of ACCase subunit alpha (AccA) and ACCase subunit beta (AccD).

It localises to the cytoplasm. It catalyses the reaction N(6)-carboxybiotinyl-L-lysyl-[protein] + acetyl-CoA = N(6)-biotinyl-L-lysyl-[protein] + malonyl-CoA. It functions in the pathway lipid metabolism; malonyl-CoA biosynthesis; malonyl-CoA from acetyl-CoA: step 1/1. Component of the acetyl coenzyme A carboxylase (ACC) complex. First, biotin carboxylase catalyzes the carboxylation of biotin on its carrier protein (BCCP) and then the CO(2) group is transferred by the carboxyltransferase to acetyl-CoA to form malonyl-CoA. In Salmonella paratyphi C (strain RKS4594), this protein is Acetyl-coenzyme A carboxylase carboxyl transferase subunit alpha.